Here is a 795-residue protein sequence, read N- to C-terminus: MAGSQLKQLKAALKANGLIGQTNIKKKNKKSKTPSETRRNDKQEILSNIRKDFNLFDGKINRTKRDVTMIQGGKFVKVGSKQHSDATRAKSDVENSMKLQYELDKKQHGKTGGLVDRRFGENNRNLTAEEKMLERFTRERQGTSKKKINFALGSDDEQDDEDNDGFVLTHSGKSLSLDNDLDDSKSNTKYYDEDSLMPEEVQPKRKSKQEVMKEVIAKSKFYKHQRQMEFQKAQDEIMNLDDEFGDIMTEFNNNPAKKPQSFSNKTPEEIEYDNKVRELTYDRRSVPADRTKTADELQKEHDTRLQKLEADRLRRMNGDYDDREAEADDLEGFWNGSEDEEEGFAIDNSAEEEGSSSGNEDDMDQSKPSGRTLKKTIIQIPGTHEDFIASLSSVDESNHCNYIKKVIETYQPRLAEGNKERMNVFVGILFKHILHLANDPCPPAENINETMKILKKLSESYNEKLVEVIRVEINDIQERIFNLQPRDLVYFVMVGYLFSTSDHYHLVVTPTLILMNESISSIPYDKKTTVSRIGQGLFIVDILLNYQTFSKRFTPEIVCFLEKAALLLIPEPEKLTNQSLSINKIIKSDTNLRTKGIKPTEDLVKVSELFGNDSQVLKLKLTNKLIDIFARILSIWRDNEVMIEILSSFSNLANHLSIHYNSPKLNQLIEKMSKIQNNLIKERKPLTLQHHKAISIATFAPKFEENFNPDKKSYDVNRERQELNKIKNQIKKERKSTLKDIRKESKFTARQQIADKKDKYDEYHKKMANIVNSISTIEGAEKNTYEREKQRRKNK.

4 disordered regions span residues 20 to 42 (GQTN…RNDK), 147 to 209 (KINF…KSKQ), 281 to 310 (YDRR…KLEA), and 349 to 370 (SAEE…KPSG). Over residues 33–42 (TPSETRRNDK) the composition is skewed to basic and acidic residues. A compositionally biased stretch (acidic residues) spans 154-164 (SDDEQDDEDND). Residues 182 to 192 (DDSKSNTKYYD) show a composition bias toward basic and acidic residues. Residues 349–363 (SAEEEGSSSGNEDDM) show a composition bias toward acidic residues.

Belongs to the NOP14 family. In terms of assembly, component of the ribosomal small subunit (SSU) processome.

It is found in the nucleus. The protein resides in the nucleolus. Functionally, involved in nucleolar processing of pre-18S ribosomal RNA. Has a role in the nuclear export of 40S pre-ribosomal subunit to the cytoplasm. The sequence is that of Probable nucleolar complex protein 14 (NOP14) from Debaryomyces hansenii (strain ATCC 36239 / CBS 767 / BCRC 21394 / JCM 1990 / NBRC 0083 / IGC 2968) (Yeast).